The following is a 363-amino-acid chain: Pyrimidine monooxygenase RutA (363 aa).

FMN contacts are provided by residues 49–50, Asn115, Glu124, 140–141, and Ser190; these read IK and RY.

Belongs to the NtaA/SnaA/DszA monooxygenase family. RutA subfamily.

The enzyme catalyses uracil + FMNH2 + NADH + O2 = (Z)-3-ureidoacrylate + FMN + NAD(+) + H2O + H(+). The catalysed reaction is thymine + FMNH2 + NADH + O2 = (Z)-2-methylureidoacrylate + FMN + NAD(+) + H2O + H(+). Its function is as follows. Catalyzes the pyrimidine ring opening between N-3 and C-4 by an unusual flavin hydroperoxide-catalyzed mechanism, adding oxygen atoms in the process to yield ureidoacrylate peracid, that immediately reacts with FMN forming ureidoacrylate and FMN-N(5)-oxide. The FMN-N(5)-oxide reacts spontaneously with NADH to produce FMN. Requires the flavin reductase RutF to regenerate FMN in vivo. This chain is Pyrimidine monooxygenase RutA, found in Pantoea ananatis (strain LMG 20103).